The following is a 918-amino-acid chain: Hexokinase-1 (918 aa).

M1 carries the N-acetylmethionine modification. Positions 1–10 are mitochondrial-binding peptide (MBP); it reads MIAAQLLAYY. 2 consecutive Hexokinase domains span residues 16–458 and 464–906; these read DDQV…MVTA and AEQH…LITA. ATP contacts are provided by residues R30 and 84 to 89; that span reads DLGGSS. A hexokinase small subdomain 1 region spans residues 73-207; sequence DGSEKGDFIA…DYDANIVAVV (135 aa). 84-91 is a D-glucose 6-phosphate binding site; the sequence is DLGGSSFR. Residues S155, 172–173, and 208–209 each bind D-glucose; these read TK and ND. Residues 208-447 form a hexokinase large subdomain 1 region; that stretch reads NDTVGTMIDC…SDVRFLLSES (240 aa). D-glucose 6-phosphate-binding residues include D209 and T232. D-glucose contacts are provided by residues N235, E260, and 291–294; that span reads QRFE. S337 is subject to Phosphoserine. Residue 413 to 415 coordinates D-glucose 6-phosphate; that stretch reads DGS. ATP contacts are provided by residues 425–426 and 532–537; these read RR and DLGGTN. Residues 521-655 are hexokinase small subdomain 2; it reads DGTEDGDFLA…EFDLDVVAVV (135 aa). 532–536 serves as a coordination point for D-glucose 6-phosphate; it reads DLGGT. D-glucose contacts are provided by residues 603 to 604, 620 to 621, and 656 to 657; these read SF, TK, and ND. The hexokinase large subdomain 2 stretch occupies residues 656–895; sequence NDTVGTMMTC…CNVSFLLSED (240 aa). D-glucose 6-phosphate contacts are provided by D657 and T680. T680 contacts ATP. D-glucose contacts are provided by residues 682–683, E708, and E742; that span reads SN. ATP-binding positions include 747–748, 784–788, and 863–867; these read GI, TKFLS, and TLYKL. Residues 861-863 and S897 contribute to the D-glucose 6-phosphate site; that span reads DGT.

This sequence belongs to the hexokinase family. As to quaternary structure, monomer. Interacts with RABL2/RABL2A; binds preferentially to GTP-bound RABL2. Interacts with VDAC1. The HK1-VDAC1 complex interacts with ATF2. Interacts (via N-terminal spermatogenic cell-specific region) with PFKM (via C-terminus). Interacts with SMAD5.

It localises to the mitochondrion outer membrane. Its subcellular location is the cytoplasm. It is found in the cytosol. The enzyme catalyses a D-hexose + ATP = a D-hexose 6-phosphate + ADP + H(+). It catalyses the reaction D-fructose + ATP = D-fructose 6-phosphate + ADP + H(+). It carries out the reaction D-glucose + ATP = D-glucose 6-phosphate + ADP + H(+). The catalysed reaction is D-mannose + ATP = D-mannose 6-phosphate + ADP + H(+). The enzyme catalyses D-glucosamine + ATP = D-glucosamine 6-phosphate + ADP + H(+). Its pathway is carbohydrate metabolism; hexose metabolism. The protein operates within carbohydrate degradation; glycolysis; D-glyceraldehyde 3-phosphate and glycerone phosphate from D-glucose: step 1/4. Its activity is regulated as follows. Hexokinase is an allosteric enzyme inhibited by its product D-glucose 6-phosphate. Hexokinase activity is inhibited by N-acetyl-D-glucosamine. In terms of biological role, catalyzes the phosphorylation of various hexoses, such as D-glucose, D-glucosamine, D-fructose, D-mannose and 2-deoxy-D-glucose, to hexose 6-phosphate (D-glucose 6-phosphate, D-glucosamine 6-phosphate, D-fructose 6-phosphate, D-mannose 6-phosphate and 2-deoxy-D-glucose 6-phosphate, respectively). Does not phosphorylate N-acetyl-D-glucosamine. Mediates the initial step of glycolysis by catalyzing phosphorylation of D-glucose to D-glucose 6-phosphate. Involved in innate immunity and inflammation by acting as a pattern recognition receptor for bacterial peptidoglycan. When released in the cytosol, N-acetyl-D-glucosamine component of bacterial peptidoglycan inhibits the hexokinase activity of HK1 and causes its dissociation from mitochondrial outer membrane, thereby activating the NLRP3 inflammasome. The protein is Hexokinase-1 of Bos taurus (Bovine).